The chain runs to 187 residues: Pyridoxal 5'-phosphate synthase subunit PdxT (187 aa).

47–49 (GES) is an L-glutamine binding site. Cysteine 76 (nucleophile) is an active-site residue. L-glutamine is bound by residues arginine 102 and 128-129 (IR). Residues histidine 165 and glutamate 167 each act as charge relay system in the active site.

The protein belongs to the glutaminase PdxT/SNO family. In terms of assembly, in the presence of PdxS, forms a dodecamer of heterodimers. Only shows activity in the heterodimer.

The enzyme catalyses aldehydo-D-ribose 5-phosphate + D-glyceraldehyde 3-phosphate + L-glutamine = pyridoxal 5'-phosphate + L-glutamate + phosphate + 3 H2O + H(+). The catalysed reaction is L-glutamine + H2O = L-glutamate + NH4(+). The protein operates within cofactor biosynthesis; pyridoxal 5'-phosphate biosynthesis. In terms of biological role, catalyzes the hydrolysis of glutamine to glutamate and ammonia as part of the biosynthesis of pyridoxal 5'-phosphate. The resulting ammonia molecule is channeled to the active site of PdxS. The protein is Pyridoxal 5'-phosphate synthase subunit PdxT of Methanococcus maripaludis (strain DSM 14266 / JCM 13030 / NBRC 101832 / S2 / LL).